Here is a 319-residue protein sequence, read N- to C-terminus: HTH-type transcriptional regulator YidZ (319 aa).

The HTH lysR-type domain occupies 8-65 (LDLNLLLCLQLLMQERSVTKAAKRMNVTPSAVSKSLAKLRAWFDDPLFVNSPLGLSPT). The H-T-H motif DNA-binding region spans 25-44 (VTKAAKRMNVTPSAVSKSLA).

Belongs to the LysR transcriptional regulatory family.

Its function is as follows. Involved in anaerobic NO protection. In Escherichia coli O17:K52:H18 (strain UMN026 / ExPEC), this protein is HTH-type transcriptional regulator YidZ.